Here is a 200-residue protein sequence, read N- to C-terminus: Small ribosomal subunit protein uS4 (200 aa).

The interval 22–42 is disordered; the sequence is TGKELQKRPYPPGQHGPGQRR. The 61-residue stretch at 92–152 folds into the S4 RNA-binding domain; sequence SRLDNLVYRL…EKSRNLQVIK (61 aa).

This sequence belongs to the universal ribosomal protein uS4 family. In terms of assembly, part of the 30S ribosomal subunit. Contacts protein S5. The interaction surface between S4 and S5 is involved in control of translational fidelity.

In terms of biological role, one of the primary rRNA binding proteins, it binds directly to 16S rRNA where it nucleates assembly of the body of the 30S subunit. Its function is as follows. With S5 and S12 plays an important role in translational accuracy. This chain is Small ribosomal subunit protein uS4, found in Geobacillus kaustophilus (strain HTA426).